The sequence spans 124 residues: Late histone H2B.2.1 (124 aa).

The disordered stretch occupies residues 1–32; it reads MPAKQTSGKGAKKAGKAKGRPAGASKTRRRKR. Residues 10 to 19 are compositionally biased toward basic residues; sequence GAKKAGKAKG. Serine 111 carries an O-linked (GlcNAc) serine glycan. Lysine 119 participates in a covalent cross-link: Glycyl lysine isopeptide (Lys-Gly) (interchain with G-Cter in ubiquitin).

It belongs to the histone H2B family. As to quaternary structure, the nucleosome is a histone octamer containing two molecules each of H2A, H2B, H3 and H4 assembled in one H3-H4 heterotetramer and two H2A-H2B heterodimers. The octamer wraps approximately 147 bp of DNA. Post-translationally, monoubiquitination of Lys-119 gives a specific tag for epigenetic transcriptional activation and is also prerequisite for histone H3 'Lys-4' and 'Lys-79' methylation. In terms of processing, glcNAcylation at Ser-111 promotes monoubiquitination of Lys-119. It fluctuates in response to extracellular glucose, and associates with transcribed genes.

Its subcellular location is the nucleus. It is found in the chromosome. Core component of nucleosome. Nucleosomes wrap and compact DNA into chromatin, limiting DNA accessibility to the cellular machineries which require DNA as a template. Histones thereby play a central role in transcription regulation, DNA repair, DNA replication and chromosomal stability. DNA accessibility is regulated via a complex set of post-translational modifications of histones, also called histone code, and nucleosome remodeling. This chain is Late histone H2B.2.1, found in Psammechinus miliaris (Green sea urchin).